Here is a 324-residue protein sequence, read N- to C-terminus: Probable 6-phosphogluconolactonase 4, chloroplastic (324 aa).

A chloroplast-targeting transit peptide spans 1-63 (MSVSAAVAAA…PAMATDGAAA (63 aa)). Residues 19-43 (ARHRSPPASRVAATSRGRPFSSGPH) form a disordered region.

Belongs to the glucosamine/galactosamine-6-phosphate isomerase family. 6-phosphogluconolactonase subfamily.

The protein resides in the plastid. It is found in the chloroplast. The catalysed reaction is 6-phospho-D-glucono-1,5-lactone + H2O = 6-phospho-D-gluconate + H(+). It participates in carbohydrate degradation; pentose phosphate pathway; D-ribulose 5-phosphate from D-glucose 6-phosphate (oxidative stage): step 2/3. Functionally, hydrolysis of 6-phosphogluconolactone to 6-phosphogluconate. This Oryza sativa subsp. japonica (Rice) protein is Probable 6-phosphogluconolactonase 4, chloroplastic.